Reading from the N-terminus, the 131-residue chain is Translation initiation factor 5A (131 aa).

Hypusine is present on Lys36.

Belongs to the eIF-5A family. The N-terminus is blocked.

The protein localises to the cytoplasm. Functions by promoting the formation of the first peptide bond. This Sulfolobus acidocaldarius (strain ATCC 33909 / DSM 639 / JCM 8929 / NBRC 15157 / NCIMB 11770) protein is Translation initiation factor 5A (eif5a).